A 128-amino-acid polypeptide reads, in one-letter code: Entry-fusion complex protein OPG094 (128 aa).

Over 1–30 (MENVPNVYFNPVFIEPTFKHSLLSVYKHRL) the chain is Intravirion. The chain crosses the membrane as a helical; Signal-anchor for type III membrane protein span at residues 31–51 (IVLFEVFVVFILIYVFFRSEL). The Virion surface segment spans residues 52–107 (NMFFMPKRKIPDPIDRLRRANLACEDDKLMIYGLPWMTTQTSALSINSKPIVYKDC). The cysteines at positions 75 and 107 are disulfide-linked.

Belongs to the orthopoxvirus OPG099 family. Interacts with OPG086. Component of the entry fusion complex (EFC) composed of OPG053, OPG076, OPG086, OPG094, OPG095, OPG099, OPG107, OPG143, OPG104J5, OPG147 and OPG155. Except for OPG095 and OPG053, each of the EFC proteins is required for assembly or stability of the complex. Most cysteines are linked by disulfide bonds. They are created by the viral disulfide bond formation pathway, a poxvirus-specific redox pathway that operates on the cytoplasmic side of the MV membranes. Post-translationally, unglycosylated because produced in viral factories instead of the classic ER -Golgi route.

It is found in the virion membrane. In terms of biological role, component of the entry fusion complex (EFC), which consists of 11 proteins. During cell infection, this complex mediates entry of the virion core into the host cytoplasm by a two-step mechanism consisting of lipid mixing of the viral and cellular membranes and subsequent pore formation. This chain is Entry-fusion complex protein OPG094 (OPG099), found in Vaccinia virus (strain Copenhagen) (VACV).